The primary structure comprises 358 residues: Isopentenyl-diphosphate delta-isomerase (358 aa).

12 to 13 (RK) contacts substrate. FMN is bound by residues 69-71 (AMT), Ser-99, and Asn-128. Residue Gln-158 participates in substrate binding. Glu-159 provides a ligand contact to Mg(2+). FMN-binding positions include Lys-190, Thr-220, 267–269 (GIR), and 288–289 (AG).

This sequence belongs to the IPP isomerase type 2 family. As to quaternary structure, homooctamer. Dimer of tetramers. FMN is required as a cofactor. The cofactor is NADPH. Mg(2+) serves as cofactor.

It localises to the cytoplasm. It catalyses the reaction isopentenyl diphosphate = dimethylallyl diphosphate. Its function is as follows. Involved in the biosynthesis of isoprenoids. Catalyzes the 1,3-allylic rearrangement of the homoallylic substrate isopentenyl (IPP) to its allylic isomer, dimethylallyl diphosphate (DMAPP). This Listeria monocytogenes serotype 4b (strain CLIP80459) protein is Isopentenyl-diphosphate delta-isomerase.